We begin with the raw amino-acid sequence, 354 residues long: uncharacterized protein (354 aa).

This sequence belongs to the band 7/mec-2 family.

The protein resides in the mitochondrion. This is an uncharacterized protein from Schizosaccharomyces pombe (strain 972 / ATCC 24843) (Fission yeast).